A 1045-amino-acid polypeptide reads, in one-letter code: Probable beta-glucosidase E (1045 aa).

The interval 1–74 (MAPPDSTHGG…SGSYQLRPVD (74 aa)) is disordered. Topologically, residues 1 to 163 (MAPPDSTHGG…PVKYARIWWR (163 aa)) are cytoplasmic. A compositionally biased stretch (basic and acidic residues) spans 11-20 (SFRDHLKTND). The chain crosses the membrane as a helical; Signal-anchor for type II membrane protein span at residues 164 to 184 (TLLAVIVTLAVVVWGFLSFAV). Over 185–1045 (SHREEPKVWP…SRDLPLMGEY (861 aa)) the chain is Extracellular. N-linked (GlcNAc...) asparagine glycosylation is found at Asn-226, Asn-234, and Asn-402. Residue Asp-430 is part of the active site. Residues Asn-473, Asn-512, Asn-577, Asn-893, Asn-902, and Asn-988 are each glycosylated (N-linked (GlcNAc...) asparagine).

It belongs to the glycosyl hydrolase 3 family.

The protein resides in the cell membrane. The catalysed reaction is Hydrolysis of terminal, non-reducing beta-D-glucosyl residues with release of beta-D-glucose.. Its pathway is glycan metabolism; cellulose degradation. In terms of biological role, beta-glucosidases are one of a number of cellulolytic enzymes involved in the degradation of cellulosic biomass. Catalyzes the last step releasing glucose from the inhibitory cellobiose. The chain is Probable beta-glucosidase E (bglE) from Neosartorya fischeri (strain ATCC 1020 / DSM 3700 / CBS 544.65 / FGSC A1164 / JCM 1740 / NRRL 181 / WB 181) (Aspergillus fischerianus).